We begin with the raw amino-acid sequence, 617 residues long: MAPPPLLPVAASTPILHGEFGSYPANGPRFALTLTTQALHIQRLRPKPEARPRDGLVSLDEVSGCGTLQSRSPEDTAAYFCIYTYPRGRRGGRRRATRTFRADGATTYEENRAEAQRWATALTCLLRGVPLSGDQEITPELLPRKPRLLILVNPFGGRGLAWQRCMDHVVPMISEAGLSFNLIQTERQNHARELVQGLSLSEWEGIVTVSGDGLLYEVLNGLLDRPDWEDAVRMPIGVLPCGSGNALAGAVNHHGGFEQVVGVDLLLNCSLLLCRGGSHPLDLLSVTLASGSRCFSFLSVAWGFLSDVDIHSERFRALGSARFTLGAVLGLASLHTYRGRLSYLPATTEPALPIPGHSLPRAKSELVLAPAPAPAATHSPLHRSVSDLPLPLPQPALVSPGSPEPLPDLSLNGGGPELTGDWGGAGDAPLSPDPLLPSSPNALKTAQLSPIAEGPPEMPASSGFLPPTHSAPEASTWGPVDHLLPPLGSPLPQDWVTIEGEFVLMLGILPSHLCADLMAAPHARFDDGVVHLCWVRSGISRAALLRILLAMEHGNHFSLGCPHLGYAAARAFRLEPLTPRGLLTVDGELVEYGPIQAQVHPGLATLLTGPAGQKPQA.

The segment at 1–140 (MAPPPLLPVA…LSGDQEITPE (140 aa)) is required for binding to sulfatide and phosphoinositides and for membrane localization. Positions 87-95 (RGRRGGRRR) match the Nuclear localization signal motif. Residues 143-290 (PRKPRLLILV…LDLLSVTLAS (148 aa)) enclose the DAGKc domain. ATP contacts are provided by residues 153 to 155 (NPF) and 185 to 189 (TERQN). Substrate is bound at residue 210–213 (SGDG). Asp212 functions as the Proton donor/acceptor in the catalytic mechanism. Residues Glu217 and 242-244 (GSG) contribute to the ATP site. Asp309 is a binding site for substrate. Residues Arg316 and Arg322 each contribute to the ATP site. Ser358 and Ser364 each carry phosphoserine. Residues 371–472 (APAPAATHSP…GFLPPTHSAP (102 aa)) are disordered. Thr377 carries the phosphothreonine modification. The short motif at 381–390 (LHRSVSDLPL) is the Nuclear export signal element. Phosphoserine is present on residues Ser384 and Ser386. The segment covering 412–426 (NGGGPELTGDWGGAG) has biased composition (gly residues). Residue Thr578 is modified to Phosphothreonine. Position 586-588 (586-588 (DGE)) interacts with ATP.

As to quaternary structure, interacts with histone H3. Interacts with HDAC1, HDAC2, MBD2 and SIN3A. Interacts with EEF1A1; the interaction enhances SPHK2 kinase activity. Interacts with PHB2. Requires Mg(2+) as cofactor. Post-translationally, phosphorylated by PKD on Ser-384 and Ser-386 upon PMA treatment. Phosphorylation induces export from the nucleus to the cytoplasm. Phosphorylated by MAPK1 and MAPK2 at Thr-578, phosphorylation is induced by agonists such as EGF and PMA and increases kinase activity. In terms of processing, cleaved by CASP1 in apoptotic cells. The truncated form is released from cells. Expressed in heart, brain, liver, kidney and testis. Expressed by mast cells (at protein level). In the substantia nigra, expressed by dopaminergic neurons (at protein level).

The protein resides in the lysosome membrane. It is found in the cytoplasm. The protein localises to the cell membrane. Its subcellular location is the endoplasmic reticulum. It localises to the nucleus. The protein resides in the mitochondrion inner membrane. It catalyses the reaction a sphingoid base + ATP = a sphingoid 1-phosphate + ADP + H(+). It carries out the reaction sphing-4-enine + ATP = sphing-4-enine 1-phosphate + ADP + H(+). The enzyme catalyses sphinganine + ATP = sphinganine 1-phosphate + ADP + H(+). The catalysed reaction is (4R)-hydroxysphinganine + ATP = (4R)-hydroxysphinganine 1-phosphate + ADP + H(+). Its function is as follows. Catalyzes the phosphorylation of sphingosine to form sphingosine-1-phosphate (SPP), a lipid mediator with both intra- and extracellular functions. Also acts on D-erythro-dihydrosphingosine, D-erythro-sphingosine and L-threo-dihydrosphingosine. Binds phosphoinositides. In contrast to prosurvival SPHK1, has a positive effect on intracellular ceramide levels, inhibits cells growth and enhances apoptosis. In mitochondria, is important for cytochrome-c oxidase assembly and mitochondrial respiration. The SPP produced in mitochondria binds PHB2 and modulates the regulation via PHB2 of complex IV assembly and respiration. In nucleus, plays a role in epigenetic regulation of gene expression. Interacts with HDAC1 and HDAC2 and, through SPP production, inhibits their enzymatic activity, preventing the removal of acetyl groups from lysine residues with histones. Up-regulates acetylation of histone H3-K9, histone H4-K5 and histone H2B-K12. In nucleus, may have an inhibitory effect on DNA synthesis and cell cycle. In mast cells, is the main regulator of SPP production which mediates calcium influx, NF-kappa-B activation, cytokine production, such as TNF and IL6, and degranulation of mast cells. In dopaminergic neurons, is involved in promoting mitochondrial functions regulating ATP and ROS levels. Also involved in the regulation of glucose and lipid metabolism. The protein is Sphingosine kinase 2 of Mus musculus (Mouse).